Here is a 429-residue protein sequence, read N- to C-terminus: Oxysterol-binding protein-like protein OBPalpha (429 aa).

It belongs to the OSBP family.

The chain is Oxysterol-binding protein-like protein OBPalpha (OBPALPHA) from Candida albicans (strain SC5314 / ATCC MYA-2876) (Yeast).